A 1173-amino-acid polypeptide reads, in one-letter code: WASH complex subunit 4 (1173 aa).

N-acetylalanine is present on alanine 2. The residue at position 7 (serine 7) is a Phosphoserine. The segment at 705–1173 (KDLALFFSLN…STVSADPVVK (469 aa)) is sufficient for interaction with WASHC5. A coiled-coil region spans residues 1135–1161 (RADKTAAEENQEKKEKEEETKTSNGDL). Basic and acidic residues predominate over residues 1142 to 1155 (EENQEKKEKEEETK). Residues 1142 to 1173 (EENQEKKEKEEETKTSNGDLSDSTVSADPVVK) form a disordered region. Position 1154 is a phosphothreonine (threonine 1154). Residues 1157–1167 (SNGDLSDSTVS) show a composition bias toward polar residues.

It belongs to the SWIP family. Component of the WASH core complex also described as WASH regulatory complex (SHRC) composed of WASH (WASHC1, WASH2P or WASH3P), WASHC2 (WASHC2A or WASHC2C), WASHC3, WASHC4 and WASHC5. The WASH core complex associates via WASHC2 with the F-actin-capping protein dimer (formed by CAPZA1, CAPZA2 or CAPZA3 and CAPZB) in a transient or substoichiometric manner which was initially described as WASH complex.

It localises to the early endosome. In terms of biological role, acts as a component of the WASH core complex that functions as a nucleation-promoting factor (NPF) at the surface of endosomes, where it recruits and activates the Arp2/3 complex to induce actin polymerization, playing a key role in the fission of tubules that serve as transport intermediates during endosome sorting. This is WASH complex subunit 4 from Homo sapiens (Human).